Here is a 420-residue protein sequence, read N- to C-terminus: Structure-specific endonuclease subunit SLX1 homolog (420 aa).

A GIY-YIG domain is found at 19–106; it reads SSDNTYPWQN…QHPLKSRRLR (88 aa). Disordered regions lie at residues 237–306 and 311–330; these read SVEE…AAVN and DDSADDGTTDGNEDGPDDVA. The span at 247–266 shows a compositional bias: low complexity; it reads PSSCSVPPSTGSSAAPTPGA. Residues 279–301 are compositionally biased toward basic and acidic residues; the sequence is VDPRLDSDDRDDNHQFESPDNHE. Over residues 311 to 327 the composition is skewed to acidic residues; it reads DDSADDGTTDGNEDGPD. An SLX1-type zinc finger spans residues 348 to 405; the sequence is CGHCHQSVYQELCIVCLNATCTYRAHLLCAAQAAVHPLGQSSPSETRLVPLRHSCPRC.

The protein belongs to the SLX1 family. As to quaternary structure, forms a heterodimer with a member of the SLX4 family. The cofactor is a divalent metal cation.

Its subcellular location is the nucleus. In terms of biological role, catalytic subunit of a heterodimeric structure-specific endonuclease that resolves DNA secondary structures generated during DNA repair and recombination. Has endonuclease activity towards branched DNA substrates, introducing single-strand cuts in duplex DNA close to junctions with ss-DNA. The chain is Structure-specific endonuclease subunit SLX1 homolog from Monosiga brevicollis (Choanoflagellate).